We begin with the raw amino-acid sequence, 126 residues long: MMCDRAVLTVRLVRSFEHRNFKPLVFKDVNLDQTVDEFISFVKQDISVRAGLPPPFRKFDYDTLKIIHQAHGAKTNELVMSLEDDEKLILREGCRLRACGVANETELAFFKMTDYIKFKADPHSEW.

Belongs to the UPF0538 family.

The protein is UPF0538 protein C2orf76 homolog of Danio rerio (Zebrafish).